We begin with the raw amino-acid sequence, 358 residues long: Probable branched-chain-amino-acid aminotransferase (358 aa).

Lys-196 is subject to N6-(pyridoxal phosphate)lysine.

Belongs to the class-IV pyridoxal-phosphate-dependent aminotransferase family. Pyridoxal 5'-phosphate serves as cofactor.

The catalysed reaction is L-leucine + 2-oxoglutarate = 4-methyl-2-oxopentanoate + L-glutamate. It catalyses the reaction L-isoleucine + 2-oxoglutarate = (S)-3-methyl-2-oxopentanoate + L-glutamate. The enzyme catalyses L-valine + 2-oxoglutarate = 3-methyl-2-oxobutanoate + L-glutamate. It participates in amino-acid biosynthesis; L-isoleucine biosynthesis; L-isoleucine from 2-oxobutanoate: step 4/4. It functions in the pathway amino-acid biosynthesis; L-leucine biosynthesis; L-leucine from 3-methyl-2-oxobutanoate: step 4/4. The protein operates within amino-acid biosynthesis; L-valine biosynthesis; L-valine from pyruvate: step 4/4. Its function is as follows. Acts on leucine, isoleucine and valine. The chain is Probable branched-chain-amino-acid aminotransferase (ilvE) from Staphylococcus epidermidis (strain ATCC 35984 / DSM 28319 / BCRC 17069 / CCUG 31568 / BM 3577 / RP62A).